The chain runs to 213 residues: Heat shock protein 27 (213 aa).

Serine 58 and serine 75 each carry phosphoserine. Residues 71–182 (SRRASGGPNA…SERIVQIQQT (112 aa)) enclose the sHSP domain. Residues 157 to 213 (VLTLKAPPPPSKEQAKSERIVQIQQTGPAHLSVKAPAPEAGDGKAENGSGEKMETSK) are disordered. The segment covering 197–213 (GDGKAENGSGEKMETSK) has biased composition (basic and acidic residues).

It belongs to the small heat shock protein (HSP20) family.

This chain is Heat shock protein 27 (Hsp27), found in Drosophila melanogaster (Fruit fly).